The sequence spans 453 residues: Vacuolar cation/proton exchanger 1b (453 aa).

At 1–67 the chain is on the cytoplasmic side; that stretch reads MPVSRMMMES…LRSLLANLND (67 aa). A helical membrane pass occupies residues 68 to 85; that stretch reads VLLTTRLFLLFPAVLLAI. Over 86 to 91 the chain is Extracellular; sequence AATYLH. Residues 92–109 traverse the membrane as a helical segment; sequence FGQVWVFVLSLIGLVPLA. Over 110–126 the chain is Cytoplasmic; sequence ERLSFLTEQIAFYTGPT. A helical transmembrane segment spans residues 127 to 147; sequence VGGLLNATFGNVTEVIIALLA. The tract at residues 136 to 171 is cation selection; the sequence is GNVTEVIIALLALREGKIEVVKCSLLGSILSNLLLV. Residues 148–160 are Extracellular-facing; that stretch reads LREGKIEVVKCSL. Residues 161 to 181 form a helical membrane-spanning segment; the sequence is LGSILSNLLLVLGTSLFLAGI. Residues 182 to 194 are Cytoplasmic-facing; it reads ANLRAHQPYDTKQ. Residues 195 to 215 traverse the membrane as a helical segment; that stretch reads AHVNTALLMLAVLCHSLPLML. At 216-232 the chain is on the extracellular side; that stretch reads RYAVTSGDHAIVSGDAA. The helical transmembrane segment at 233–253 threads the bilayer; sequence LHLSRACSILMLIAYLAYLFF. Residues 254 to 283 lie on the Cytoplasmic side of the membrane; it reads QLNTHRQLFEPQQVEDDDDDDLVIAQDDEP. A helical membrane pass occupies residues 284–304; it reads VLGFSSAMIWLALMTLLTALL. Topologically, residues 305 to 327 are extracellular; it reads SGYVVSTIEAASESWELSVSFIS. The chain crosses the membrane as a helical span at residues 328–348; it reads IILLPIVGNAAEHAGAVIFAL. A cation selection region spans residues 335–370; that stretch reads GNAAEHAGAVIFALKNKMDITLGVSLGSATQISMFV. Topologically, residues 349-364 are cytoplasmic; it reads KNKMDITLGVSLGSAT. Residues 365–385 traverse the membrane as a helical segment; the sequence is QISMFVVPVSVIVAWTMGIPM. The Extracellular segment spans residues 386–388; that stretch reads DLD. The chain crosses the membrane as a helical span at residues 389 to 409; sequence FNLLETGSLFLAILVTAFTLQ. Topologically, residues 410–414 are cytoplasmic; the sequence is EGESH. Residues 415 to 435 form a helical membrane-spanning segment; the sequence is YLKGLILVLCYAVISVCFFVI. The Extracellular portion of the chain corresponds to 436–453; it reads RRRSAGGTDGVHHLDVIV.

The protein belongs to the Ca(2+):cation antiporter (CaCA) (TC 2.A.19) family. Cation/proton exchanger (CAX) subfamily. Expressed in embryo and roots.

Its subcellular location is the vacuole membrane. Vacuolar cation/proton exchanger (CAX). Translocates Ca(2+) and other metal ions into vacuoles using the proton gradient formed by H(+)-ATPase and H(+)-pyrophosphatase. The polypeptide is Vacuolar cation/proton exchanger 1b (CAX1b) (Oryza sativa subsp. japonica (Rice)).